The chain runs to 1376 residues: MKEWPPNLAFHNKVIDGAAIKQLISRLIQRFGMLYTSHVLDQVKLLGFKQATASSISLGIDDLLTIPSKRWLVQDAQQQSFLLEKYYQYGNVHAVEKLRQSIEIWDAISAYLRQEMTPNFGMTDPLNPVHIMSFSGARGNASQVNQLIGMRGLMSDPLGQMIDLPIQSNLREGLSLTEYIISSYGARKGVVDTAIRTADAGYLTRRLVDVVQHIIVRGTDCGTTRGLSLSPQNGGVPESTQTLIGRVLAKDIYIGPRCIAVRNQDLGGGLVNRLITFKKKPIYVRTPFTCRSTSWICRFCYGRSPTSACGDLVELGEAVGIIAGQSIGEPGTQLTLRTFHTGGVFTGGTAEQVRAPFNGKIKFNEDLVHPTRTRHGQPAFLCYIDLYLTIESEDIIHSVPIPPKSFLLVQNDQYVESEQVIAEISAGTSTFAFKDRVRKHIYSDSSGEMHSNTGMYHARKFPFSNVHILPKTSHLWILLGDLCGSGPVLFSMYKDQDQMSIHSLSVQGRNTPSLSVNNDQLKHRRLSLYDKNGTGGGSIPILNYSEMTRSLSTARCNLLYPAILHENFSLLAKKRRTRFLIPFQSIQEHRRKNERILCSDISIKIPRNGLFRGNSILAYFDDPRYKIGVSGITKYGTIEVDSIVTKESFINYGGVQPKDEGKVDPLFFIPEEVHIFPETSSIMVRNNSIIGINTKITLNKRSRVGGLVRVKKIHRGIKLQIFSGDISFPRKRDKRFIPQNKDILIPPQIRKRNFNKSKKAKNWIYVQKMRPTNKNSFFLLQPVVTYEIADGINLARLFPPDLLQEIDNIQLRVGNYIRYGDGELIPGISGKNPRIQLVRTFLVLNWDQDKKDSSIEEAHASFVEVSTKGMVRDFLRIHLRKSQIAYAYMRKRNDPSGSGFPSDNELDHSNRNPFSSSYPKARVRQSLNGTIRTLLNRNKECQSLLILSSSNCFRLGPFNNVKYHNPKKESIKRDTDPLIPIRNFSGPLGTVPQIANFDVFYHLITKNRISVFHYLPPEKGKLQVIQSFLMDENGRIYKSDPYSNIFLNPFNFNWYFLQHNYHKNYPNYCEETSTIINLGQFLFETVCIAKNGPRLKSGQVFILQVGYVIIRSGKPYLAIPGATVHGHSGQIVYGGDTLVTFIYEKARSADITQGLPKVDAMFEVRSKNSISMRLKARDEYWNEYITRNLGIYWGLLIGAKLTIAQSSLSLVNEIQKVYRSQGVQIDNRHIELIVRQITSKVLISEDGMSNLFLPGELIGLLQAERTGRALEKGICYRAILVGITKASLNTQSFISEASFQQTARVLAKAALRGRIDWLKGLKENVVLGGMSPAGTGFRGLVHPSSKKYKTLSLETQRKILFDGKVRDLLFHHKRIV.

Positions 221, 290, 297, and 300 each coordinate Zn(2+). The interval 895 to 919 (PSGSGFPSDNELDHSNRNPFSSSYP) is disordered.

This sequence belongs to the RNA polymerase beta' chain family. RpoC2 subfamily. As to quaternary structure, in plastids the minimal PEP RNA polymerase catalytic core is composed of four subunits: alpha, beta, beta', and beta''. When a (nuclear-encoded) sigma factor is associated with the core the holoenzyme is formed, which can initiate transcription. Requires Zn(2+) as cofactor.

The protein resides in the plastid. It is found in the chloroplast. The catalysed reaction is RNA(n) + a ribonucleoside 5'-triphosphate = RNA(n+1) + diphosphate. Its function is as follows. DNA-dependent RNA polymerase catalyzes the transcription of DNA into RNA using the four ribonucleoside triphosphates as substrates. The polypeptide is DNA-directed RNA polymerase subunit beta'' (Pelargonium hortorum (Common geranium)).